A 180-amino-acid chain; its full sequence is Large ribosomal subunit protein uL5 (180 aa).

It belongs to the universal ribosomal protein uL5 family. As to quaternary structure, part of the 50S ribosomal subunit; part of the 5S rRNA/L5/L18/L25 subcomplex. Contacts the 5S rRNA and the P site tRNA. Forms a bridge to the 30S subunit in the 70S ribosome.

Functionally, this is one of the proteins that bind and probably mediate the attachment of the 5S RNA into the large ribosomal subunit, where it forms part of the central protuberance. In the 70S ribosome it contacts protein S13 of the 30S subunit (bridge B1b), connecting the 2 subunits; this bridge is implicated in subunit movement. Contacts the P site tRNA; the 5S rRNA and some of its associated proteins might help stabilize positioning of ribosome-bound tRNAs. The polypeptide is Large ribosomal subunit protein uL5 (Stenotrophomonas maltophilia (strain R551-3)).